A 100-amino-acid chain; its full sequence is Ribosomal processing cysteine protease Prp (100 aa).

His16 serves as the catalytic Proton donor. Cys28 (nucleophile) is an active-site residue.

Belongs to the Prp family. Homodimer.

An essential cysteine protease that cleaves the N-terminus from ribosomal protein bL27. In Mycoplasma pneumoniae (strain ATCC 29342 / M129 / Subtype 1) (Mycoplasmoides pneumoniae), this protein is Ribosomal processing cysteine protease Prp.